The primary structure comprises 144 residues: 6,7-dimethyl-8-ribityllumazine synthase (144 aa).

5-amino-6-(D-ribitylamino)uracil contacts are provided by residues phenylalanine 21, 56 to 58 (AYE), and 80 to 82 (AVI). 85–86 (GT) serves as a coordination point for (2S)-2-hydroxy-3-oxobutyl phosphate. Residue histidine 88 is the Proton donor of the active site. Residue phenylalanine 113 participates in 5-amino-6-(D-ribitylamino)uracil binding. Arginine 127 lines the (2S)-2-hydroxy-3-oxobutyl phosphate pocket.

The protein belongs to the DMRL synthase family. Forms an icosahedral capsid composed of 60 subunits, arranged as a dodecamer of pentamers.

The catalysed reaction is (2S)-2-hydroxy-3-oxobutyl phosphate + 5-amino-6-(D-ribitylamino)uracil = 6,7-dimethyl-8-(1-D-ribityl)lumazine + phosphate + 2 H2O + H(+). Its pathway is cofactor biosynthesis; riboflavin biosynthesis; riboflavin from 2-hydroxy-3-oxobutyl phosphate and 5-amino-6-(D-ribitylamino)uracil: step 1/2. Functionally, catalyzes the formation of 6,7-dimethyl-8-ribityllumazine by condensation of 5-amino-6-(D-ribitylamino)uracil with 3,4-dihydroxy-2-butanone 4-phosphate. This is the penultimate step in the biosynthesis of riboflavin. This Photobacterium leiognathi protein is 6,7-dimethyl-8-ribityllumazine synthase (ribH).